The chain runs to 570 residues: Ferroportin (570 aa).

The Cytoplasmic segment spans residues methionine 1–serine 23. The helical transmembrane segment at alanine 24–leucine 53 threads the bilayer. 2 residues coordinate Fe cation: aspartate 39 and histidine 43. At tyrosine 54–serine 57 the chain is on the extracellular side. Residues leucine 58–aspartate 84 form a helical membrane-spanning segment. Residues lysine 85 to alanine 87 lie on the Cytoplasmic side of the membrane. The chain crosses the membrane as a helical span at residues arginine 88–asparagine 118. The Extracellular portion of the chain corresponds to glutamate 119 to glycine 126. Residues tryptophan 127 to valine 162 traverse the membrane as a helical segment. Residues alanine 163–glycine 164 are Cytoplasmic-facing. A helical transmembrane segment spans residues glutamate 165–isoleucine 195. Residues methionine 196–valine 202 lie on the Extracellular side of the membrane. The chain crosses the membrane as a helical span at residues isoleucine 203 to lysine 229. Residues threonine 230–proline 306 are Cytoplasmic-facing. A helical membrane pass occupies residues valine 307–tyrosine 333. Residue cysteine 326 coordinates Fe cation. Over threonine 334–serine 338 the chain is Extracellular. A helical transmembrane segment spans residues glycine 339–lysine 366. Residues cysteine 367–glycine 368 are Cytoplasmic-facing. The chain crosses the membrane as a helical span at residues leucine 369 to valine 391. The Extracellular segment spans residues phenylalanine 392–valine 452. Residue asparagine 437 is glycosylated (N-linked (GlcNAc...) asparagine). A helical transmembrane segment spans residues serine 453 to asparagine 482. Residues valine 483–glutamate 487 lie on the Cytoplasmic side of the membrane. Residues arginine 488–leucine 512 form a helical membrane-spanning segment. Histidine 506 is a Fe cation binding site. The Extracellular portion of the chain corresponds to alanine 513–asparagine 515. A helical transmembrane segment spans residues proline 516–alanine 541. At glutamine 542 to valine 570 the chain is on the cytoplasmic side.

Belongs to the ferroportin (FP) (TC 2.A.100) family. SLC40A subfamily. Identified in a complex with STOM. Interacts with HAMP; affinity of the peptide hormone HAMP for SLC40A1 increases by 80-fold in the presence of iron and the interaction promotes SLC40A1 ubiquitination and degradation. Part of a complex composed of SLC40A1/ferroportin, TF/transferrin and HEPH/hephaestin that transfers iron from cells to transferrin. In terms of processing, polyubiquitinated by RNF217; leading to proteasomal degradation. Under conditions of high systemic iron levels, both the hormone peptide hepcidin/HAMP and holo(iron bound)-transferrin/TF induce the ubiquitination, internalization and proteasomal degradation of SLC40A1 to control iron release from cells. As to expression, high expression in spleen, liver, kidney, heart and duodenum.

It is found in the cell membrane. The protein localises to the basolateral cell membrane. The catalysed reaction is Fe(2+)(in) = Fe(2+)(out). Transports Fe(2+) from the inside of a cell to the outside of the cell, playing a key role for maintaining systemic iron homeostasis. Transports iron from intestinal, splenic, hepatic cells, macrophages and erythrocytes into the blood to provide iron to other tissues. Controls therefore dietary iron uptake, iron recycling by macrophages and erythrocytes, and release of iron stores in hepatocytes. When iron is in excess in serum, circulating HAMP/hepcidin levels increase resulting in a degradation of SLC40A1, thus limiting the iron efflux to plasma. This Mus musculus (Mouse) protein is Ferroportin.